The chain runs to 51 residues: Small ribosomal subunit protein uS13 (51 aa).

This sequence belongs to the universal ribosomal protein uS13 family. In terms of assembly, part of the 30S ribosomal subunit. Forms a loose heterodimer with protein S19. Forms two bridges to the 50S subunit in the 70S ribosome.

Its function is as follows. Located at the top of the head of the 30S subunit, it contacts several helices of the 16S rRNA. In the 70S ribosome it contacts the 23S rRNA (bridge B1a) and protein L5 of the 50S subunit (bridge B1b), connecting the 2 subunits; these bridges are implicated in subunit movement. Contacts the tRNAs in the A and P-sites. This chain is Small ribosomal subunit protein uS13 (rpsM), found in Lactococcus lactis subsp. cremoris (Streptococcus cremoris).